The sequence spans 294 residues: Cytidine deaminase (294 aa).

CMP/dCMP-type deaminase domains lie at 48–168 and 186–294; these read DEDA…FGPK and LTGD…VLLG. Residue 89–91 participates in substrate binding; sequence NME. Histidine 102 lines the Zn(2+) pocket. Glutamate 104 acts as the Proton donor in catalysis. Cysteine 129 and cysteine 132 together coordinate Zn(2+).

It belongs to the cytidine and deoxycytidylate deaminase family. As to quaternary structure, homodimer. Zn(2+) is required as a cofactor.

It catalyses the reaction cytidine + H2O + H(+) = uridine + NH4(+). The catalysed reaction is 2'-deoxycytidine + H2O + H(+) = 2'-deoxyuridine + NH4(+). In terms of biological role, this enzyme scavenges exogenous and endogenous cytidine and 2'-deoxycytidine for UMP synthesis. In Salmonella newport (strain SL254), this protein is Cytidine deaminase.